The following is a 944-amino-acid chain: Nonsense-mediated mRNA decay factor SMG8 (944 aa).

2 disordered regions span residues 560–597 and 628–653; these read NTGKSGAPQDEDAGEDEAEEEEGQERELPTKKKLQNTA and QASSEQLSNSEQNTTSSGTSSADTEN. Positions 568-583 are enriched in acidic residues; the sequence is QDEDAGEDEAEEEEGQ. Positions 628–650 are enriched in polar residues; the sequence is QASSEQLSNSEQNTTSSGTSSAD.

This sequence belongs to the SMG8 family.

Functionally, involved in nonsense-mediated decay (NMD) of mRNAs containing premature stop codons. Probable component of kinase complex containing nonC and recruited to stalled ribosomes. In Drosophila simulans (Fruit fly), this protein is Nonsense-mediated mRNA decay factor SMG8.